An 88-amino-acid chain; its full sequence is Protein K3 (88 aa).

One can recognise an S1 motif domain in the interval 8-82 (LPNAGDVIKG…TKGYIDVNYK (75 aa)). Binding to host EIF2AK2/PKR regions lie at residues 43 to 53 (SVKMHMDRYVE) and 74 to 79 (KGYIDV).

The protein belongs to the poxviridae K3 protein family. Interacts with host EIF2AK2/PKR kinase.

Functionally, viral mimic of EIF2S1/eIF-2alpha that acts as a pseudosubstrate for EIF2AK2/PKR kinase. Inhibits therefore EIF2S1/eIF-2alpha phosphorylation by host EIF2AK2/PKR kinase and prevents protein synthesis shutoff. Determinant of host species specificity. This Vaccinia virus (strain Western Reserve) (VACV) protein is Protein K3.